Here is a 313-residue protein sequence, read N- to C-terminus: Maintenance of mitochondrial morphology protein 1 (313 aa).

At 1 to 12 (MIHLPQGSFTQG) the chain is on the lumenal side. A helical membrane pass occupies residues 13 to 33 (LIVGQLLTLAIIYVFLRFFLF). At 34–313 (CSPIPKSVAN…APQEESSNED (280 aa)) the chain is on the cytoplasmic side. Positions 42 to 63 (ANSPKQTGNETPDETPSTPLSN) are enriched in polar residues. The tract at residues 42–65 (ANSPKQTGNETPDETPSTPLSNNK) is disordered. The region spanning 90 to 288 (EPESLDWFNV…SPQFQQIAIP (199 aa)) is the SMP-LTD domain.

The protein belongs to the MMM1 family. Homodimer. Component of the ER-mitochondria encounter structure (ERMES) or MDM complex, composed of mmm1, mdm10, mdm12 and mdm34. A mmm1 homodimer associates with one molecule of mdm12 on each side in a pairwise head-to-tail manner, and the SMP-LTD domains of mmm1 and mdm12 generate a continuous hydrophobic tunnel for phospholipid trafficking.

It localises to the endoplasmic reticulum membrane. Its function is as follows. Component of the ERMES/MDM complex, which serves as a molecular tether to connect the endoplasmic reticulum (ER) and mitochondria. Components of this complex are involved in the control of mitochondrial shape and protein biogenesis, and function in nonvesicular lipid trafficking between the ER and mitochondria. The mdm12-mmm1 subcomplex functions in the major beta-barrel assembly pathway that is responsible for biogenesis of all outer membrane beta-barrel proteins, and acts in a late step after the SAM complex. The mdm10-mdm12-mmm1 subcomplex further acts in the TOM40-specific pathway after the action of the mdm12-mmm1 complex. Essential for establishing and maintaining the structure of mitochondria and maintenance of mtDNA nucleoids. In Schizosaccharomyces pombe (strain 972 / ATCC 24843) (Fission yeast), this protein is Maintenance of mitochondrial morphology protein 1.